Here is a 61-residue protein sequence, read N- to C-terminus: Photosystem II reaction center protein K (61 aa).

Positions 1–24 (MLNIFSLICICLHSTLYSSSFFLA) are excised as a propeptide. The helical transmembrane segment at 36 to 56 (IVDFMPVIPLLFFLLAFVWQA) threads the bilayer.

The protein belongs to the PsbK family. As to quaternary structure, PSII is composed of 1 copy each of membrane proteins PsbA, PsbB, PsbC, PsbD, PsbE, PsbF, PsbH, PsbI, PsbJ, PsbK, PsbL, PsbM, PsbT, PsbX, PsbY, PsbZ, Psb30/Ycf12, at least 3 peripheral proteins of the oxygen-evolving complex and a large number of cofactors. It forms dimeric complexes.

The protein localises to the plastid. The protein resides in the chloroplast thylakoid membrane. In terms of biological role, one of the components of the core complex of photosystem II (PSII). PSII is a light-driven water:plastoquinone oxidoreductase that uses light energy to abstract electrons from H(2)O, generating O(2) and a proton gradient subsequently used for ATP formation. It consists of a core antenna complex that captures photons, and an electron transfer chain that converts photonic excitation into a charge separation. This chain is Photosystem II reaction center protein K, found in Eucalyptus globulus subsp. globulus (Tasmanian blue gum).